Reading from the N-terminus, the 343-residue chain is Anthranilate phosphoribosyltransferase (343 aa).

Residues G84, 87–88 (GD), T92, 94–97 (NIST), 112–120 (KHGNRGVSS), and S124 contribute to the 5-phospho-alpha-D-ribose 1-diphosphate site. G84 serves as a coordination point for anthranilate. S96 contributes to the Mg(2+) binding site. N115 is an anthranilate binding site. R170 lines the anthranilate pocket. Residues D229 and E230 each coordinate Mg(2+).

This sequence belongs to the anthranilate phosphoribosyltransferase family. Homodimer. Requires Mg(2+) as cofactor.

The enzyme catalyses N-(5-phospho-beta-D-ribosyl)anthranilate + diphosphate = 5-phospho-alpha-D-ribose 1-diphosphate + anthranilate. It functions in the pathway amino-acid biosynthesis; L-tryptophan biosynthesis; L-tryptophan from chorismate: step 2/5. Its function is as follows. Catalyzes the transfer of the phosphoribosyl group of 5-phosphorylribose-1-pyrophosphate (PRPP) to anthranilate to yield N-(5'-phosphoribosyl)-anthranilate (PRA). This is Anthranilate phosphoribosyltransferase from Burkholderia ambifaria (strain ATCC BAA-244 / DSM 16087 / CCUG 44356 / LMG 19182 / AMMD) (Burkholderia cepacia (strain AMMD)).